The following is a 465-amino-acid chain: Glutamate--tRNA ligase (465 aa).

Residues 5–15 carry the 'HIGH' region motif; it reads PSPTGMFHVGG. Residues cysteine 96, cysteine 98, cysteine 118, and aspartate 120 each coordinate Zn(2+). Positions 228–232 match the 'KMSKS' region motif; it reads KLSKR. Lysine 231 is a binding site for ATP.

Belongs to the class-I aminoacyl-tRNA synthetase family. Glutamate--tRNA ligase type 1 subfamily. Monomer. The cofactor is Zn(2+).

It localises to the cytoplasm. The catalysed reaction is tRNA(Glu) + L-glutamate + ATP = L-glutamyl-tRNA(Glu) + AMP + diphosphate. Its function is as follows. Catalyzes the attachment of glutamate to tRNA(Glu) in a two-step reaction: glutamate is first activated by ATP to form Glu-AMP and then transferred to the acceptor end of tRNA(Glu). In Salinispora tropica (strain ATCC BAA-916 / DSM 44818 / JCM 13857 / NBRC 105044 / CNB-440), this protein is Glutamate--tRNA ligase.